The sequence spans 161 residues: Allophycocyanin alpha subunit (161 aa).

Cys-81 contributes to the (2R,3E)-phycocyanobilin binding site.

Belongs to the phycobiliprotein family. In terms of assembly, heterodimer of an alpha and a beta chain. In terms of processing, contains one covalently linked phycocyanobilin chromophore. The chromophore on position 81 is added by the phycocyanobilin lyase CpcUS.

It localises to the cellular thylakoid membrane. Functionally, light-harvesting photosynthetic bile pigment-protein from the phycobiliprotein complex. Allophycocyanin has a maximum absorption at approximately 650 nanometers. The protein is Allophycocyanin alpha subunit (apcA) of Picosynechococcus sp. (strain ATCC 27264 / PCC 7002 / PR-6) (Agmenellum quadruplicatum).